We begin with the raw amino-acid sequence, 191 residues long: dTTP/UTP pyrophosphatase (191 aa).

Asp71 functions as the Proton acceptor in the catalytic mechanism.

Belongs to the Maf family. YhdE subfamily. A divalent metal cation serves as cofactor.

The protein resides in the cytoplasm. The catalysed reaction is dTTP + H2O = dTMP + diphosphate + H(+). The enzyme catalyses UTP + H2O = UMP + diphosphate + H(+). In terms of biological role, nucleoside triphosphate pyrophosphatase that hydrolyzes dTTP and UTP. May have a dual role in cell division arrest and in preventing the incorporation of modified nucleotides into cellular nucleic acids. The sequence is that of dTTP/UTP pyrophosphatase from Geobacter sulfurreducens (strain ATCC 51573 / DSM 12127 / PCA).